The following is a 104-amino-acid chain: Glycine-rich protein (104 aa).

The first 18 residues, 1–18 (MKSMIAAILFALVATSLA), serve as a signal peptide directing secretion.

This sequence belongs to the non-disulfide-bridged peptide (NDBP) superfamily. In terms of tissue distribution, expressed by the venom gland.

It is found in the secreted. The protein is Glycine-rich protein of Lychas mucronatus (Chinese swimming scorpion).